A 20-amino-acid chain; its full sequence is Pregnancy-associated glycoprotein 55h (20 aa).

N4 carries N-linked (GlcNAc...) asparagine glycosylation.

The protein belongs to the peptidase A1 family. In terms of tissue distribution, highly expressed in the placenta between day 60 and day 100 of gestation.

It is found in the secreted. The protein localises to the extracellular space. The sequence is that of Pregnancy-associated glycoprotein 55h from Ovis aries (Sheep).